Reading from the N-terminus, the 420-residue chain is Glucose-1-phosphate adenylyltransferase (420 aa).

Alpha-D-glucose 1-phosphate-binding positions include tyrosine 107, glycine 172, 187 to 188 (EK), and serine 205.

This sequence belongs to the bacterial/plant glucose-1-phosphate adenylyltransferase family. In terms of assembly, homotetramer.

It carries out the reaction alpha-D-glucose 1-phosphate + ATP + H(+) = ADP-alpha-D-glucose + diphosphate. It functions in the pathway glycan biosynthesis; glycogen biosynthesis. In terms of biological role, involved in the biosynthesis of ADP-glucose, a building block required for the elongation reactions to produce glycogen. Catalyzes the reaction between ATP and alpha-D-glucose 1-phosphate (G1P) to produce pyrophosphate and ADP-Glc. This chain is Glucose-1-phosphate adenylyltransferase, found in Rhodopseudomonas palustris (strain TIE-1).